Consider the following 444-residue polypeptide: Glutamyl-tRNA reductase (444 aa).

Substrate-binding positions include 49–52, Ser117, 122–124, and Gln128; these read TCNR and EPQ. Catalysis depends on Cys50, which acts as the Nucleophile. 202 to 207 contacts NADP(+); it reads GAGETI.

Belongs to the glutamyl-tRNA reductase family. As to quaternary structure, homodimer.

It catalyses the reaction (S)-4-amino-5-oxopentanoate + tRNA(Glu) + NADP(+) = L-glutamyl-tRNA(Glu) + NADPH + H(+). It participates in porphyrin-containing compound metabolism; protoporphyrin-IX biosynthesis; 5-aminolevulinate from L-glutamyl-tRNA(Glu): step 1/2. In terms of biological role, catalyzes the NADPH-dependent reduction of glutamyl-tRNA(Glu) to glutamate 1-semialdehyde (GSA). In Mannheimia succiniciproducens (strain KCTC 0769BP / MBEL55E), this protein is Glutamyl-tRNA reductase.